Here is a 142-residue protein sequence, read N- to C-terminus: Large ribosomal subunit protein uL11 (142 aa).

Belongs to the universal ribosomal protein uL11 family. Part of the ribosomal stalk of the 50S ribosomal subunit. Interacts with L10 and the large rRNA to form the base of the stalk. L10 forms an elongated spine to which L12 dimers bind in a sequential fashion forming a multimeric L10(L12)X complex. In terms of processing, one or more lysine residues are methylated.

In terms of biological role, forms part of the ribosomal stalk which helps the ribosome interact with GTP-bound translation factors. The chain is Large ribosomal subunit protein uL11 from Mycobacterium sp. (strain MCS).